Consider the following 138-residue polypeptide: Cysteine desulfuration protein SufE (138 aa).

Cys51 acts as the Cysteine persulfide intermediate in catalysis.

The protein belongs to the SufE family. Homodimer. Interacts with SufS.

Its subcellular location is the cytoplasm. It functions in the pathway cofactor biosynthesis; iron-sulfur cluster biosynthesis. In terms of biological role, participates in cysteine desulfuration mediated by SufS. Cysteine desulfuration mobilizes sulfur from L-cysteine to yield L-alanine and constitutes an essential step in sulfur metabolism for biosynthesis of a variety of sulfur-containing biomolecules. Functions as a sulfur acceptor for SufS, by mediating the direct transfer of the sulfur atom from the S-sulfanylcysteine of SufS, an intermediate product of cysteine desulfuration process. The protein is Cysteine desulfuration protein SufE of Klebsiella pneumoniae subsp. pneumoniae (strain ATCC 700721 / MGH 78578).